A 308-amino-acid polypeptide reads, in one-letter code: Ribosomal RNA large subunit methyltransferase F (308 aa).

It belongs to the methyltransferase superfamily. METTL16/RlmF family.

The protein localises to the cytoplasm. It catalyses the reaction adenosine(1618) in 23S rRNA + S-adenosyl-L-methionine = N(6)-methyladenosine(1618) in 23S rRNA + S-adenosyl-L-homocysteine + H(+). Its function is as follows. Specifically methylates the adenine in position 1618 of 23S rRNA. This Salmonella arizonae (strain ATCC BAA-731 / CDC346-86 / RSK2980) protein is Ribosomal RNA large subunit methyltransferase F.